Reading from the N-terminus, the 294-residue chain is Protease HtpX (294 aa).

2 consecutive transmembrane segments (helical) span residues 4–24 (IALF…VLSL) and 34–52 (GLLI…VSLM). Residue His-139 participates in Zn(2+) binding. The active site involves Glu-140. His-143 is a binding site for Zn(2+). A run of 2 helical transmembrane segments spans residues 158 to 178 (VVNT…AGFL) and 194 to 214 (LIYF…ASII). Position 223 (Glu-223) interacts with Zn(2+).

It belongs to the peptidase M48B family. Requires Zn(2+) as cofactor.

It is found in the cell inner membrane. In Klebsiella pneumoniae subsp. pneumoniae (strain ATCC 700721 / MGH 78578), this protein is Protease HtpX.